The sequence spans 886 residues: Protein suppressor of hairy wing (886 aa).

Disordered stretches follow at residues 24 to 62 and 167 to 211; these read SVSP…GIKG and DEVV…KNSG. The segment covering 184-201 has biased composition (acidic residues); it reads VTEEEEEEEEDDLDEEGD. The C2H2-type 1; atypical zinc finger occupies 221 to 243; the sequence is HVCGKCYKTFRRLMSLKKHLEFC. A C2H2-type 2 zinc finger spans residues 291–314; it reads INCPDCPKSFKTQTSYERHIFITH. The segment at 320–342 adopts a C2H2-type 3; atypical zinc-finger fold; it reads YPCSICNANLRSEALLKLHEEQH. 9 consecutive C2H2-type zinc fingers follow at residues 349–367, 381–403, 414–436, 442–464, 470–492, 498–520, 524–546, 554–578, and 600–623; these read YACK…LKRH, MSCK…LKHH, YMCH…IRTH, FDCD…RRYH, YSCT…MKRH, HKCE…SKTH, FACD…VKEH, FSCT…AGDH, and TDCA…RSVH. Over residues 571-587 the composition is skewed to basic and acidic residues; that stretch reads QHMDAGDHSEKSGEKPQ. A disordered region spans residues 571 to 594; that stretch reads QHMDAGDHSEKSGEKPQRAKRSST.

Its subcellular location is the nucleus. In terms of biological role, component of the gypsy chromatin insulator complex which is required for the function of the gypsy chromatin insulator and other endogenous chromatin insulators. Chromatin insulators are regulatory elements which establish independent domains of transcriptional activity within eukaryotic genomes. Insulators have two defining properties; they can block the communication between an enhancer and a promoter when placed between them and can also buffer transgenes from position effect variegation (PEV). Insulators are proposed to structure the chromatin fiber into independent domains of differing transcriptional potential by promoting the formation of distinct chromatin loops. This chromatin looping may involve the formation of insulator bodies, where homotypic interactions between individual subunits of the insulator complex could promote the clustering of widely spaced insulators at the nuclear periphery. Within the gypsy insulator complex, this protein binds specifically to a region of the gypsy element located 3' of the 5' long terminal repeat (LTR), and may also mediate interaction with other endogenous insulators at sites distinct from those recognized by Cp190. Cooperates with pita and cliff to recruit Cp190 and regulate insulator function at the front-ultraabdominal (Fub) boundary. This Drosophila ananassae (Fruit fly) protein is Protein suppressor of hairy wing (su(Hw)).